A 246-amino-acid chain; its full sequence is Proteolipid protein DM gamma (246 aa).

The next 4 helical transmembrane spans lie at L19–C35, V71–L87, V118–F134, and F206–I222.

It belongs to the myelin proteolipid protein family. In terms of tissue distribution, highly expressed in white matter in myelinating shark brain.

The protein resides in the membrane. The chain is Proteolipid protein DM gamma from Squalus acanthias (Spiny dogfish).